The primary structure comprises 257 residues: UPF0246 protein YaaA (257 aa).

Belongs to the UPF0246 family.

The sequence is that of UPF0246 protein YaaA from Salmonella typhi.